Consider the following 40-residue polypeptide: Dolichyl-diphosphooligosaccharide--protein glycosyltransferase subunit 4 (40 aa).

At 1–4 (MITD) the chain is on the lumenal side. A helical transmembrane segment spans residues 5–25 (VQLAIFSNVLGVFLFLLVVAY). Residues 26-40 (HYINANTGKSIIKSK) are Cytoplasmic-facing.

The protein belongs to the OST4 family. As to quaternary structure, component of the oligosaccharyltransferase (OST) complex.

It localises to the endoplasmic reticulum membrane. Functionally, subunit of the oligosaccharyl transferase (OST) complex that catalyzes the initial transfer of a defined glycan (Glc(3)Man(9)GlcNAc(2) in eukaryotes) from the lipid carrier dolichol-pyrophosphate to an asparagine residue within an Asn-X-Ser/Thr consensus motif in nascent polypeptide chains, the first step in protein N-glycosylation. N-glycosylation occurs cotranslationally and the complex associates with the Sec61 complex at the channel-forming translocon complex that mediates protein translocation across the endoplasmic reticulum (ER). All subunits are required for a maximal enzyme activity. This is Dolichyl-diphosphooligosaccharide--protein glycosyltransferase subunit 4 from Drosophila grimshawi (Hawaiian fruit fly).